Consider the following 146-residue polypeptide: Single-stranded DNA-binding protein, mitochondrial (146 aa).

The transit peptide at 1–22 (MQHTRRMLNPLLTGLRNLPARG) directs the protein to the mitochondrion. Residues 38 to 142 (VNTVTILGRV…IIADDVLFFR (105 aa)) enclose the SSB domain.

Homotetramer. Uniformly distributed in the early embryo. High levels detected in the anterior and posterior midgut primordia of stage 12 embryos. In larvae, high levels were detected in proliferating tissues including the CNS and digestive tract. In adults, highly expressed in the CNS, digestive tract and ovary.

The protein localises to the mitochondrion. Its function is as follows. Binds preferentially and cooperatively to pyrimidine rich single-stranded DNA (ss-DNA). Required to maintain the copy number of mitochondrial DNA (mtDNA) and plays crucial roles during mtDNA replication that stimulate activity of the gamma complex polymerase PolG1/tam at the replication fork. Promotes PolG1 activity largely by organizing the template DNA and eliminating secondary structures to favor ss-DNA conformations that facilitate PolG1 activity. The sequence is that of Single-stranded DNA-binding protein, mitochondrial (mtSSB) from Drosophila melanogaster (Fruit fly).